Reading from the N-terminus, the 107-residue chain is Putative double-stranded DNA mimic protein NTHI1680 (107 aa).

Belongs to the putative dsDNA mimic protein family.

May act as a double-stranded DNA (dsDNA) mimic. Probably regulates the activity of a dsDNA-binding protein. This chain is Putative double-stranded DNA mimic protein NTHI1680, found in Haemophilus influenzae (strain 86-028NP).